The chain runs to 342 residues: MSVFVSGANGFIAQHIVDLLLKEDYKVIGSARSQEKAENLTEAFGNNPKFSMEVVPDISKLDAFDHVFQKHGKDIKIVLHTASPFCFDITDSERDLLIPAVNGVKGILHSIKKYAADSVERVVLTSSYAAVFDMAKENDKSLTFNEESWNPATWESCQSDPVNAYCGSKKFAEKAAWEFLEENRDSVKFELTAVNPVYVFGPQMFDKDVKKHLNTSCELVNSLMHLSPEDKIPELFGGYIDVRDVAKAHLVAFQKRETIGQRLIVSEARFTMQDVLDILNEDFPVLKGNIPVGKPGSGATHNTLGATLDNKKSKKLLGFKFRNLKETIDDTASQILKFEGRI.

Residues 7–12, R32, K36, 57–58, Y165, K169, V199, and S216 contribute to the NADP(+) site; these read GANGFI and DI. K169 (proton donor) is an active-site residue. Phosphoserine is present on S333.

The protein belongs to the NAD(P)-dependent epimerase/dehydratase family. Dihydroflavonol-4-reductase subfamily. As to quaternary structure, monomer. The N-terminus is blocked.

It is found in the cytoplasm. Its subcellular location is the nucleus. The enzyme catalyses (S)-lactaldehyde + NADP(+) = methylglyoxal + NADPH + H(+). It carries out the reaction 3-methylbutanol + NADP(+) = 3-methylbutanal + NADPH + H(+). The catalysed reaction is 2,5-hexanedione + 2 NADPH + 2 H(+) = (2S,5S)-hexanediol + 2 NADP(+). It catalyses the reaction (S)-3-chloro-1-phenyl-1-propanol + NADP(+) = 3-chloro-1-phenyl-1-propanone + NADPH + H(+). With respect to regulation, activated by glutathione. Functionally, catalyzes the irreversible reduction of the cytotoxic compound methylglyoxal (MG, 2-oxopropanal) to (S)-lactaldehyde as an alternative to detoxification of MG by glyoxalase I GLO1. MG is synthesized via a bypath of glycolysis from dihydroxyacetone phosphate and is believed to play a role in cell cycle regulation and stress adaptation. Also catalyzes the reduction of 3-methylbutanal to 3-methylbutanol. Acts as a suppressor of 3-methylbutanol-induced filamentation by modulating the levels of 3-methylbutanal, the signal to which cells respond by filamentation. Also involved in ergosterol metabolism. The chain is NADPH-dependent methylglyoxal reductase GRE2 (GRE2) from Saccharomyces cerevisiae (strain ATCC 204508 / S288c) (Baker's yeast).